The chain runs to 229 residues: Lantibiotic transport ATP-binding protein SrtF (229 aa).

The ABC transporter domain maps to 2–225 (LKIQNLKKSY…EELFNNQILF (224 aa)). 34 to 41 (GPNGAGKS) contacts ATP.

It belongs to the ABC transporter superfamily.

Implicated in the export process of the lantibiotic SrtA. This is Lantibiotic transport ATP-binding protein SrtF (srtF) from Streptococcus pyogenes serotype M1.